Reading from the N-terminus, the 385-residue chain is Putative type I restriction enzyme specificity subunit S.HindORF215P (385 aa).

Belongs to the type-I restriction system S methylase family.

A putative specificity subunit for a type I restriction enzyme; the corresponding endonuclease and methylase subunits have multiple frameshifts and are probably not expressed. This Haemophilus influenzae (strain ATCC 51907 / DSM 11121 / KW20 / Rd) protein is Putative type I restriction enzyme specificity subunit S.HindORF215P.